The primary structure comprises 460 residues: Proline--tRNA ligase (460 aa).

The protein belongs to the class-II aminoacyl-tRNA synthetase family. ProS type 3 subfamily. Homodimer.

Its subcellular location is the cytoplasm. The catalysed reaction is tRNA(Pro) + L-proline + ATP = L-prolyl-tRNA(Pro) + AMP + diphosphate. Functionally, catalyzes the attachment of proline to tRNA(Pro) in a two-step reaction: proline is first activated by ATP to form Pro-AMP and then transferred to the acceptor end of tRNA(Pro). The polypeptide is Proline--tRNA ligase (Methanococcus maripaludis (strain C5 / ATCC BAA-1333)).